Reading from the N-terminus, the 359-residue chain is Phospho-N-acetylmuramoyl-pentapeptide-transferase (359 aa).

10 helical membrane passes run 23-43 (VAFF…IKWA), 68-88 (MGGI…GNLF), 92-112 (VLLG…DDYM), 126-146 (MKFF…LYIG), 165-185 (AFKI…VFLA), 198-218 (GLAT…VYVA), 235-255 (SGEL…FLWY), 262-282 (VFMG…MAIV), 287-307 (ILLL…ILQV), and 336-356 (KIIV…LLSL).

Belongs to the glycosyltransferase 4 family. MraY subfamily. Mg(2+) is required as a cofactor.

It is found in the cell inner membrane. It carries out the reaction UDP-N-acetyl-alpha-D-muramoyl-L-alanyl-gamma-D-glutamyl-meso-2,6-diaminopimeloyl-D-alanyl-D-alanine + di-trans,octa-cis-undecaprenyl phosphate = di-trans,octa-cis-undecaprenyl diphospho-N-acetyl-alpha-D-muramoyl-L-alanyl-D-glutamyl-meso-2,6-diaminopimeloyl-D-alanyl-D-alanine + UMP. Its pathway is cell wall biogenesis; peptidoglycan biosynthesis. In terms of biological role, catalyzes the initial step of the lipid cycle reactions in the biosynthesis of the cell wall peptidoglycan: transfers peptidoglycan precursor phospho-MurNAc-pentapeptide from UDP-MurNAc-pentapeptide onto the lipid carrier undecaprenyl phosphate, yielding undecaprenyl-pyrophosphoryl-MurNAc-pentapeptide, known as lipid I. In Helicobacter hepaticus (strain ATCC 51449 / 3B1), this protein is Phospho-N-acetylmuramoyl-pentapeptide-transferase.